A 120-amino-acid chain; its full sequence is Ribonuclease P protein component (120 aa).

The protein belongs to the RnpA family. As to quaternary structure, consists of a catalytic RNA component (M1 or rnpB) and a protein subunit.

It carries out the reaction Endonucleolytic cleavage of RNA, removing 5'-extranucleotides from tRNA precursor.. RNaseP catalyzes the removal of the 5'-leader sequence from pre-tRNA to produce the mature 5'-terminus. It can also cleave other RNA substrates such as 4.5S RNA. The protein component plays an auxiliary but essential role in vivo by binding to the 5'-leader sequence and broadening the substrate specificity of the ribozyme. The chain is Ribonuclease P protein component from Chelativorans sp. (strain BNC1).